Here is a 737-residue protein sequence, read N- to C-terminus: UPF0507 protein YML002W (737 aa).

Residues Met1 to Asn83 form the VPS9 domain.

It belongs to the UPF0507 family.

The sequence is that of UPF0507 protein YML002W from Saccharomyces cerevisiae (strain ATCC 204508 / S288c) (Baker's yeast).